The following is a 34-amino-acid chain: Phalloidin proprotein (34 aa).

A propeptide spanning residues 1 to 10 (MSDINASRLP) is cleaved from the precursor. The segment at residues 11-17 (AWLATCP) is a cross-link (cyclopeptide (Ala-Pro)). The 2'-cysteinyl-6'-hydroxytryptophan sulfoxide (Trp-Cys) cross-link spans 12–16 (WLATC). Positions 18–34 (CVGDDVNPTLSRGESLC) are excised as a propeptide.

Belongs to the MSDIN fungal toxin family. Processed by the macrocyclase-peptidase enzyme POPB to yield a toxic cyclic heptapeptide. POPB first removes 10 residues from the N-terminus. Conformational trapping of the remaining peptide forces the enzyme to release this intermediate rather than proceed to macrocyclization. The enzyme rebinds the remaining peptide in a different conformation and catalyzes macrocyclization of the N-terminal 7 residues.

In terms of biological role, toxin that belongs to the bicyclic heptapeptides called phallotoxins. Although structurally related to amatoxins, phallotoxins have a different mode of action, which is the stabilization of F-actin. Phallotoxins are poisonous when administered parenterally, but not orally because of poor absorption. The protein is Phalloidin proprotein of Amanita phalloides (Death cap).